The sequence spans 433 residues: 3-phosphoshikimate 1-carboxyvinyltransferase (433 aa).

The 3-phosphoshikimate site is built by Lys-22, Ser-23, and Arg-27. Lys-22 contributes to the phosphoenolpyruvate binding site. Phosphoenolpyruvate is bound by residues Gly-95 and Arg-123. The 3-phosphoshikimate site is built by Ser-166, Gln-168, Asp-314, and Lys-341. Residue Gln-168 coordinates phosphoenolpyruvate. The active-site Proton acceptor is Asp-314. Residues Arg-345 and Arg-386 each contribute to the phosphoenolpyruvate site.

It belongs to the EPSP synthase family. Monomer.

It localises to the cytoplasm. The catalysed reaction is 3-phosphoshikimate + phosphoenolpyruvate = 5-O-(1-carboxyvinyl)-3-phosphoshikimate + phosphate. Its pathway is metabolic intermediate biosynthesis; chorismate biosynthesis; chorismate from D-erythrose 4-phosphate and phosphoenolpyruvate: step 6/7. Its function is as follows. Catalyzes the transfer of the enolpyruvyl moiety of phosphoenolpyruvate (PEP) to the 5-hydroxyl of shikimate-3-phosphate (S3P) to produce enolpyruvyl shikimate-3-phosphate and inorganic phosphate. This is 3-phosphoshikimate 1-carboxyvinyltransferase from Acidithiobacillus ferrooxidans (strain ATCC 23270 / DSM 14882 / CIP 104768 / NCIMB 8455) (Ferrobacillus ferrooxidans (strain ATCC 23270)).